The primary structure comprises 134 residues: Retinoid-binding protein 7 (134 aa).

This sequence belongs to the calycin superfamily. Fatty-acid binding protein (FABP) family. In terms of tissue distribution, highly expressed in white adipose tissue and mammary gland.

It localises to the cytoplasm. In terms of biological role, intracellular transport of retinol. The chain is Retinoid-binding protein 7 (Rbp7) from Mus musculus (Mouse).